The sequence spans 352 residues: Probable protein phosphatase 2C 42 (352 aa).

Positions 26–321 constitute a PPM-type phosphatase domain; the sequence is AYASSAMQGY…DNMSVILVRF (296 aa). 4 residues coordinate Mn(2+): aspartate 62, glycine 63, aspartate 267, and aspartate 312. Positions 328-352 are disordered; that stretch reads RGARAATSSTSTGTVPSRHSKSISL. Residues 329-341 show a composition bias toward low complexity; that stretch reads GARAATSSTSTGT.

Belongs to the PP2C family. It depends on Mg(2+) as a cofactor. Mn(2+) serves as cofactor.

The catalysed reaction is O-phospho-L-seryl-[protein] + H2O = L-seryl-[protein] + phosphate. The enzyme catalyses O-phospho-L-threonyl-[protein] + H2O = L-threonyl-[protein] + phosphate. The polypeptide is Probable protein phosphatase 2C 42 (Oryza sativa subsp. japonica (Rice)).